The following is a 374-amino-acid chain: MPHKVSLSRLKLTDFRNYAAAALDLDGRHAVLTGDNGAGKTNLMEAVSLLSPGRGLRRAAYGDITRVGAAGGFSIFAALDGMEGEVEIGTGIETGEETTARRLRINGTQAKTADELTDHLRLLWLTPAMDGLFTGASSDRRRFLDRLVLSLDPAHGRRASDFERAMRSRNKLLDEGRFDPSWLAGIEEQMASLGIAMALARQEMLGLLTRLIEETRETSPFPSASLQLSGFMDGQFTRPSVDLEDEYAAMLSESRYRDAGAGRTLDGPHRADLIVHHREKAMEAERCSTGEQKALLVGLVLAHARLVGNLTGHAPILLLDEIAAHLDEGRRAALFDLIDGLGGQAFMTGTDRAMFSALGDRAQVFTVADGKIFE.

An ATP-binding site is contributed by 34 to 41 (GDNGAGKT).

This sequence belongs to the RecF family.

It localises to the cytoplasm. Its function is as follows. The RecF protein is involved in DNA metabolism; it is required for DNA replication and normal SOS inducibility. RecF binds preferentially to single-stranded, linear DNA. It also seems to bind ATP. The protein is DNA replication and repair protein RecF of Rhizobium leguminosarum bv. trifolii (strain WSM2304).